We begin with the raw amino-acid sequence, 98 residues long: Small ribosomal subunit protein uS19 (98 aa).

Residues 77–98 (TRTYRGHAGGKAEKGGSAPKRK) are disordered.

This sequence belongs to the universal ribosomal protein uS19 family.

Functionally, protein S19 forms a complex with S13 that binds strongly to the 16S ribosomal RNA. This chain is Small ribosomal subunit protein uS19, found in Prosthecochloris aestuarii (strain DSM 271 / SK 413).